The chain runs to 117 residues: Immunoglobulin lambda variable 7-43 (117 aa).

A signal peptide spans 1-19 (MAWTPLFLFLLTCCPGSNS). A framework-1 region spans residues 20 to 44 (QTVVTQEPSLTVSPGGTVTLTCASS). Residues 20–117 (QTVVTQEPSL…YCLLYYGGAQ (98 aa)) enclose the Ig-like domain. A disulfide bridge connects residues cysteine 41 and cysteine 109. The complementarity-determining-1 stretch occupies residues 45–53 (TGAVTSGYY). The tract at residues 54–70 (PNWFQQKPGQAPRALIY) is framework-2. The interval 71 to 73 (STS) is complementarity-determining-2. The framework-3 stretch occupies residues 74 to 109 (NKHSWTPARFSGSLLGGKAALTLSGVQPEDEAEYYC). Residues 110–117 (LLYYGGAQ) form a complementarity-determining-3 region.

Immunoglobulins are composed of two identical heavy chains and two identical light chains; disulfide-linked.

It localises to the secreted. The protein localises to the cell membrane. V region of the variable domain of immunoglobulin light chains that participates in the antigen recognition. Immunoglobulins, also known as antibodies, are membrane-bound or secreted glycoproteins produced by B lymphocytes. In the recognition phase of humoral immunity, the membrane-bound immunoglobulins serve as receptors which, upon binding of a specific antigen, trigger the clonal expansion and differentiation of B lymphocytes into immunoglobulins-secreting plasma cells. Secreted immunoglobulins mediate the effector phase of humoral immunity, which results in the elimination of bound antigens. The antigen binding site is formed by the variable domain of one heavy chain, together with that of its associated light chain. Thus, each immunoglobulin has two antigen binding sites with remarkable affinity for a particular antigen. The variable domains are assembled by a process called V-(D)-J rearrangement and can then be subjected to somatic hypermutations which, after exposure to antigen and selection, allow affinity maturation for a particular antigen. This chain is Immunoglobulin lambda variable 7-43, found in Homo sapiens (Human).